The following is a 294-amino-acid chain: tRNA dimethylallyltransferase (294 aa).

10 to 17 (GPTAVGKT) contacts ATP. Residue 12–17 (TAVGKT) participates in substrate binding. An interaction with substrate tRNA region spans residues 35 to 38 (DSQQ).

It belongs to the IPP transferase family. As to quaternary structure, monomer. The cofactor is Mg(2+).

The catalysed reaction is adenosine(37) in tRNA + dimethylallyl diphosphate = N(6)-dimethylallyladenosine(37) in tRNA + diphosphate. Catalyzes the transfer of a dimethylallyl group onto the adenine at position 37 in tRNAs that read codons beginning with uridine, leading to the formation of N6-(dimethylallyl)adenosine (i(6)A). The sequence is that of tRNA dimethylallyltransferase from Streptococcus pneumoniae (strain P1031).